We begin with the raw amino-acid sequence, 180 residues long: Translation machinery-associated protein 16 homolog (180 aa).

Basic and acidic residues predominate over residues 1-12; the sequence is MTNLRKELEKCK. The tract at residues 1–32 is disordered; the sequence is MTNLRKELEKCKHPNSRKTKALGKKARRQNNK. Residues 13–32 show a composition bias toward basic residues; sequence HPNSRKTKALGKKARRQNNK.

This sequence belongs to the TMA16 family.

The chain is Translation machinery-associated protein 16 homolog from Drosophila melanogaster (Fruit fly).